Consider the following 71-residue polypeptide: UPF0435 protein SERP1418 (71 aa).

The protein belongs to the UPF0435 family.

This is UPF0435 protein SERP1418 from Staphylococcus epidermidis (strain ATCC 35984 / DSM 28319 / BCRC 17069 / CCUG 31568 / BM 3577 / RP62A).